A 391-amino-acid chain; its full sequence is Succinate--CoA ligase [ADP-forming] subunit beta (391 aa).

Residues 9-246 (KHLFADYDIP…ITQEDEAEVQ (238 aa)) form the ATP-grasp domain. ATP contacts are provided by residues Lys46, 53 to 55 (GRG), Glu99, Leu102, and Glu107. Mg(2+)-binding residues include Asn199 and Asp213. Substrate-binding positions include Asn266 and 323–325 (GIV).

It belongs to the succinate/malate CoA ligase beta subunit family. In terms of assembly, heterotetramer of two alpha and two beta subunits. Requires Mg(2+) as cofactor.

The catalysed reaction is succinate + ATP + CoA = succinyl-CoA + ADP + phosphate. It catalyses the reaction GTP + succinate + CoA = succinyl-CoA + GDP + phosphate. The protein operates within carbohydrate metabolism; tricarboxylic acid cycle; succinate from succinyl-CoA (ligase route): step 1/1. Its function is as follows. Succinyl-CoA synthetase functions in the citric acid cycle (TCA), coupling the hydrolysis of succinyl-CoA to the synthesis of either ATP or GTP and thus represents the only step of substrate-level phosphorylation in the TCA. The beta subunit provides nucleotide specificity of the enzyme and binds the substrate succinate, while the binding sites for coenzyme A and phosphate are found in the alpha subunit. This is Succinate--CoA ligase [ADP-forming] subunit beta from Alkalilimnicola ehrlichii (strain ATCC BAA-1101 / DSM 17681 / MLHE-1).